The following is a 279-amino-acid chain: MQYHDQSLQTLKLGKKTEYISTYDRTLLQAVPRKLNRDDLGISTKQPFSFGADIWTAYEISWLNLKGVPQVAIADVEIDYQSENLIESKSFKLYLNSFNQSQFENLQQVEQILQQDLIKCAKGQVKVRLNSLQNYAQQPIATLQGECIDEQDIEIRCYEFDPNLLENCTNKQWVEEKLVSHLLKSNCLITNQPDWGTVQIHYIGNQINREKLLRYLISFRQHNEFHEQCVERIFCDLMKFAQPEKLSVYARYTRRGGLDINPFRSNFEPIPLNQRLARQ.

Residue Ile-86 to Ser-88 participates in substrate binding. NADPH is bound at residue Ser-88–Lys-89. Cys-187 serves as the catalytic Thioimide intermediate. Asp-194 functions as the Proton donor in the catalytic mechanism. His-226–Glu-227 contacts substrate. Position 255–256 (Arg-255–Gly-256) interacts with NADPH.

It belongs to the GTP cyclohydrolase I family. QueF type 2 subfamily. As to quaternary structure, homodimer.

It is found in the cytoplasm. The enzyme catalyses 7-aminomethyl-7-carbaguanine + 2 NADP(+) = 7-cyano-7-deazaguanine + 2 NADPH + 3 H(+). Its pathway is tRNA modification; tRNA-queuosine biosynthesis. In terms of biological role, catalyzes the NADPH-dependent reduction of 7-cyano-7-deazaguanine (preQ0) to 7-aminomethyl-7-deazaguanine (preQ1). The chain is NADPH-dependent 7-cyano-7-deazaguanine reductase from Histophilus somni (strain 129Pt) (Haemophilus somnus).